An 87-amino-acid polypeptide reads, in one-letter code: Small ribosomal subunit protein bS20 (87 aa).

Basic residues predominate over residues 1–11; sequence MANIKSAKKRA. The interval 1 to 27 is disordered; sequence MANIKSAKKRAVQSEKRRQHNASQRSM.

It belongs to the bacterial ribosomal protein bS20 family.

In terms of biological role, binds directly to 16S ribosomal RNA. This is Small ribosomal subunit protein bS20 from Histophilus somni (strain 129Pt) (Haemophilus somnus).